The primary structure comprises 312 residues: Signal peptidase I (312 aa).

The chain crosses the membrane as a helical span at residues 7–27 (IFLLTSTFFTGILWIIDHILL). Residues 28–63 (IKNYFYNKKKTKNNNTILINKVILENKKCFFRSLSS) lie on the Cytoplasmic side of the membrane. The helical transmembrane segment at 64 to 84 (LFPTFFIVFIIRSFIYEPFQI) threads the bilayer. Over 85-312 (PSGSMMPTLL…IRIKRIGNIY (228 aa)) the chain is Extracellular. Residues Ser88 and Lys142 contribute to the active site.

The protein belongs to the peptidase S26 family.

Its subcellular location is the cell membrane. It catalyses the reaction Cleavage of hydrophobic, N-terminal signal or leader sequences from secreted and periplasmic proteins.. This Buchnera aphidicola subsp. Schizaphis graminum (strain Sg) protein is Signal peptidase I (lepB).